A 1380-amino-acid polypeptide reads, in one-letter code: DNA-directed RNA polymerase subunit beta (1380 aa).

This sequence belongs to the RNA polymerase beta chain family. The RNAP catalytic core consists of 2 alpha, 1 beta, 1 beta' and 1 omega subunit. When a sigma factor is associated with the core the holoenzyme is formed, which can initiate transcription.

The catalysed reaction is RNA(n) + a ribonucleoside 5'-triphosphate = RNA(n+1) + diphosphate. In terms of biological role, DNA-dependent RNA polymerase catalyzes the transcription of DNA into RNA using the four ribonucleoside triphosphates as substrates. The polypeptide is DNA-directed RNA polymerase subunit beta (Ehrlichia canis (strain Jake)).